Here is a 177-residue protein sequence, read N- to C-terminus: Large ribosomal subunit protein uL6 (177 aa).

The protein belongs to the universal ribosomal protein uL6 family. Part of the 50S ribosomal subunit.

This protein binds to the 23S rRNA, and is important in its secondary structure. It is located near the subunit interface in the base of the L7/L12 stalk, and near the tRNA binding site of the peptidyltransferase center. This chain is Large ribosomal subunit protein uL6, found in Yersinia pseudotuberculosis serotype O:1b (strain IP 31758).